Consider the following 747-residue polypeptide: Nucleolar complex-associated protein 3 (747 aa).

Residues 1-11 (MAARKNQKSPK) are compositionally biased toward basic residues. A disordered region spans residues 1 to 142 (MAARKNQKSP…EDEQDYELRP (142 aa)). Residues 74–86 (ENPSSLKYLSSIN) are compositionally biased toward polar residues. The segment covering 89-109 (DLGKKVEKGPRPDIYDLKKSQ) has biased composition (basic and acidic residues). Position 120 is a phosphoserine (Ser120). The stretch at 214 to 234 (KQQIKNDKEALGIQAQQLLEE) forms a coiled coil.

This sequence belongs to the CBF/MAK21 family.

It is found in the nucleus. The protein localises to the nucleolus. In terms of biological role, may be required for synthesis of 60S ribosomal subunits and the transport of pre-ribosomes from the nucleoplasm to the cytoplasm. This chain is Nucleolar complex-associated protein 3 (noc3), found in Schizosaccharomyces pombe (strain 972 / ATCC 24843) (Fission yeast).